We begin with the raw amino-acid sequence, 319 residues long: Oxaloacetate tautomerase fahd2, mitochondrial (319 aa).

Residues 1–31 (MLTQTRVALRVLKNAHLTLPKRNISQSPALS) constitute a mitochondrion transit peptide. Residues Glu164, Glu166, and Asp195 each contribute to the Mg(2+) site.

This sequence belongs to the FAH family. Requires Mg(2+) as cofactor. Mn(2+) serves as cofactor.

The protein localises to the mitochondrion. The enzyme catalyses oxaloacetate = enol-oxaloacetate. In terms of biological role, tautomerase that converts enol-oxaloacetate, a strong inhibitor of succinate dehydrogenase, to the physiological keto form of oxaloacetate. It is thereby required to maximize aerobic respiration efficiency by preventing succinate dehydrogenase inhibition. In Xenopus laevis (African clawed frog), this protein is Oxaloacetate tautomerase fahd2, mitochondrial (fahd2).